Reading from the N-terminus, the 335-residue chain is Glucan endo-1,3-beta-glucosidase, acidic isoform (335 aa).

The signal sequence occupies residues 1–29 (MARQGVIASMHALALLLGAFAAIPTGVQS). The active-site Proton donor is the E122. The Nucleophile role is filled by E259.

This sequence belongs to the glycosyl hydrolase 17 family. In terms of tissue distribution, accumulates in aleurone layers. Much lower levels are found in the embryo, and none in starchy endosperm.

The protein resides in the secreted. It localises to the extracellular space. The enzyme catalyses Hydrolysis of (1-&gt;3)-beta-D-glucosidic linkages in (1-&gt;3)-beta-D-glucans.. In terms of biological role, is thought to be an important plant defense-related product against fungal pathogens. In Zea mays (Maize), this protein is Glucan endo-1,3-beta-glucosidase, acidic isoform.